The following is a 59-amino-acid chain: Small, acid-soluble spore protein H 2 (59 aa).

Belongs to the SspH family.

It localises to the spore core. This is Small, acid-soluble spore protein H 2 from Geobacillus kaustophilus (strain HTA426).